Here is a 505-residue protein sequence, read N- to C-terminus: N-succinylglutamate 5-semialdehyde dehydrogenase (505 aa).

An NAD(+)-binding site is contributed by 234 to 239 (GSAHTG). Active-site residues include glutamate 257 and cysteine 291.

The protein belongs to the aldehyde dehydrogenase family. AstD subfamily.

The enzyme catalyses N-succinyl-L-glutamate 5-semialdehyde + NAD(+) + H2O = N-succinyl-L-glutamate + NADH + 2 H(+). Its pathway is amino-acid degradation; L-arginine degradation via AST pathway; L-glutamate and succinate from L-arginine: step 4/5. Functionally, catalyzes the NAD-dependent reduction of succinylglutamate semialdehyde into succinylglutamate. This chain is N-succinylglutamate 5-semialdehyde dehydrogenase, found in Yersinia pestis bv. Antiqua (strain Antiqua).